The sequence spans 208 residues: Ribonuclease HII (208 aa).

The 191-residue stretch at 18–208 (GFYAGVDEVG…RPVKERLEAC (191 aa)) folds into the RNase H type-2 domain. 3 residues coordinate a divalent metal cation: Asp-24, Glu-25, and Asp-116.

It belongs to the RNase HII family. Requires Mn(2+) as cofactor. Mg(2+) serves as cofactor.

The protein resides in the cytoplasm. The catalysed reaction is Endonucleolytic cleavage to 5'-phosphomonoester.. Its function is as follows. Endonuclease that specifically degrades the RNA of RNA-DNA hybrids. This Shewanella loihica (strain ATCC BAA-1088 / PV-4) protein is Ribonuclease HII.